We begin with the raw amino-acid sequence, 521 residues long: Acetyl-CoA hydrolase (521 aa).

276 to 280 (GIGNI) provides a ligand contact to CoA. Catalysis depends on Glu-301, which acts as the 5-glutamyl coenzyme A thioester intermediate. CoA contacts are provided by Asn-391 and Gly-395.

It belongs to the acetyl-CoA hydrolase/transferase family.

It is found in the cytoplasm. The enzyme catalyses acetyl-CoA + H2O = acetate + CoA + H(+). Presumably involved in regulating the intracellular acetyl-CoA pool for fatty acid and cholesterol synthesis and fatty acid oxidation. This chain is Acetyl-CoA hydrolase (ach1), found in Schizosaccharomyces pombe (strain 972 / ATCC 24843) (Fission yeast).